A 377-amino-acid chain; its full sequence is tRNA 2-selenouridine synthase (377 aa).

In terms of domain architecture, Rhodanese spans 18–141; sequence ITRGVTLIDV…LRQEAMDATD (124 aa). Cysteine 101 acts as the S-selanylcysteine intermediate in catalysis.

This sequence belongs to the SelU family. In terms of assembly, monomer.

It catalyses the reaction 5-methylaminomethyl-2-thiouridine(34) in tRNA + selenophosphate + (2E)-geranyl diphosphate + H2O + H(+) = 5-methylaminomethyl-2-selenouridine(34) in tRNA + (2E)-thiogeraniol + phosphate + diphosphate. The enzyme catalyses 5-methylaminomethyl-2-thiouridine(34) in tRNA + (2E)-geranyl diphosphate = 5-methylaminomethyl-S-(2E)-geranyl-thiouridine(34) in tRNA + diphosphate. The catalysed reaction is 5-methylaminomethyl-S-(2E)-geranyl-thiouridine(34) in tRNA + selenophosphate + H(+) = 5-methylaminomethyl-2-(Se-phospho)selenouridine(34) in tRNA + (2E)-thiogeraniol. It carries out the reaction 5-methylaminomethyl-2-(Se-phospho)selenouridine(34) in tRNA + H2O = 5-methylaminomethyl-2-selenouridine(34) in tRNA + phosphate. Functionally, involved in the post-transcriptional modification of the uridine at the wobble position (U34) of tRNA(Lys), tRNA(Glu) and tRNA(Gln). Catalyzes the conversion of 2-thiouridine (S2U-RNA) to 2-selenouridine (Se2U-RNA). Acts in a two-step process involving geranylation of 2-thiouridine (S2U) to S-geranyl-2-thiouridine (geS2U) and subsequent selenation of the latter derivative to 2-selenouridine (Se2U) in the tRNA chain. The protein is tRNA 2-selenouridine synthase of Cronobacter sakazakii (strain ATCC BAA-894) (Enterobacter sakazakii).